The sequence spans 587 residues: Aspartate--tRNA ligase (587 aa).

Glu-175 serves as a coordination point for L-aspartate. An aspartate region spans residues 199–202 (QQFK). L-aspartate-binding residues include Arg-221 and His-446. Position 221 to 223 (221 to 223 (RDE)) interacts with ATP. Glu-480 contacts ATP. Arg-487 is an L-aspartate binding site. 532–535 (GVDR) is a binding site for ATP.

This sequence belongs to the class-II aminoacyl-tRNA synthetase family. Type 1 subfamily. Homodimer.

It is found in the cytoplasm. It carries out the reaction tRNA(Asp) + L-aspartate + ATP = L-aspartyl-tRNA(Asp) + AMP + diphosphate. Its function is as follows. Catalyzes the attachment of L-aspartate to tRNA(Asp) in a two-step reaction: L-aspartate is first activated by ATP to form Asp-AMP and then transferred to the acceptor end of tRNA(Asp). This Streptomyces avermitilis (strain ATCC 31267 / DSM 46492 / JCM 5070 / NBRC 14893 / NCIMB 12804 / NRRL 8165 / MA-4680) protein is Aspartate--tRNA ligase.